The following is a 184-amino-acid chain: ATP synthase subunit b (184 aa).

The chain crosses the membrane as a helical span at residues isoleucine 19–proline 39.

Belongs to the ATPase B chain family. In terms of assembly, F-type ATPases have 2 components, F(1) - the catalytic core - and F(0) - the membrane proton channel. F(1) has five subunits: alpha(3), beta(3), gamma(1), delta(1), epsilon(1). F(0) has three main subunits: a(1), b(2) and c(10-14). The alpha and beta chains form an alternating ring which encloses part of the gamma chain. F(1) is attached to F(0) by a central stalk formed by the gamma and epsilon chains, while a peripheral stalk is formed by the delta and b chains.

Its subcellular location is the cell membrane. F(1)F(0) ATP synthase produces ATP from ADP in the presence of a proton or sodium gradient. F-type ATPases consist of two structural domains, F(1) containing the extramembraneous catalytic core and F(0) containing the membrane proton channel, linked together by a central stalk and a peripheral stalk. During catalysis, ATP synthesis in the catalytic domain of F(1) is coupled via a rotary mechanism of the central stalk subunits to proton translocation. Its function is as follows. Component of the F(0) channel, it forms part of the peripheral stalk, linking F(1) to F(0). In Cutibacterium acnes (strain DSM 16379 / KPA171202) (Propionibacterium acnes), this protein is ATP synthase subunit b.